The sequence spans 589 residues: Alpha-1,2-mannosyltransferase MNN22 (589 aa).

Residues 1–16 lie on the Cytoplasmic side of the membrane; that stretch reads MGSIFKDGRRILVRPK. Residues 17 to 33 form a helical membrane-spanning segment; it reads SLIICLCLISIIFTQLI. Topologically, residues 34 to 589 are extracellular; the sequence is RYQYQLIADE…NTIAWLGKKT (556 aa). The disordered stretch occupies residues 50-77; sequence EDHSSSQSLKNTKLNSTRSSSPISPPKS. Over residues 54–71 the composition is skewed to polar residues; that stretch reads SSQSLKNTKLNSTRSSSP. 3 N-linked (GlcNAc...) asparagine glycosylation sites follow: Asn64, Asn332, and Asn530.

It belongs to the MNN1/MNT family.

It localises to the golgi apparatus membrane. It participates in protein modification; protein glycosylation. Alpha-1,2-mannosyltransferase required for cell wall integrity. Responsible for addition of the first alpha-1,2-linked mannose to form the branches on the mannan backbone of oligosaccharides. Addition of alpha-1,2-mannose is required for stabilization of the alpha-1,6-mannose backbone and hence regulates mannan fibril length; and is important for both immune recognition and virulence. The chain is Alpha-1,2-mannosyltransferase MNN22 (MNN22) from Candida albicans (strain SC5314 / ATCC MYA-2876) (Yeast).